The following is a 482-amino-acid chain: Auxin transporter-like protein 4 (482 aa).

Topologically, residues methionine 1 to glutamine 59 are cytoplasmic. A helical membrane pass occupies residues valine 60–valine 77. Residues serine 78–glycine 79 lie on the Extracellular side of the membrane. A helical transmembrane segment spans residues isoleucine 80–leucine 100. Topologically, residues tyrosine 101–lysine 135 are cytoplasmic. Residues alanine 136–alanine 156 traverse the membrane as a helical segment. The Extracellular segment spans residues cysteine 157–threonine 172. Residues tryptophan 173 to tyrosine 193 traverse the membrane as a helical segment. Over arginine 194–tryptophan 196 the chain is Cytoplasmic. A helical transmembrane segment spans residues serine 197–valine 217. Residues asparagine 218–leucine 232 are Extracellular-facing. Residues valine 233–valine 253 traverse the membrane as a helical segment. The Cytoplasmic portion of the chain corresponds to glutamate 254 to lysine 266. Residues tyrosine 267–valine 287 form a helical membrane-spanning segment. The Extracellular segment spans residues tyrosine 288–alanine 314. Asparagine 297 carries an N-linked (GlcNAc...) asparagine glycan. Residues valine 315–phenylalanine 335 traverse the membrane as a helical segment. The Cytoplasmic portion of the chain corresponds to valine 336 to arginine 356. Residues leucine 357–asparagine 377 form a helical membrane-spanning segment. A topological domain (extracellular) is located at residue serine 378. A helical membrane pass occupies residues alanine 379–leucine 399. Over threonine 400 to threonine 422 the chain is Cytoplasmic. Residues alanine 423–glycine 443 traverse the membrane as a helical segment. At glycine 444–histidine 482 the chain is on the extracellular side.

Belongs to the amino acid/polyamine transporter 2 family. Amino acid/auxin permease (AAAP) (TC 2.A.18.1) subfamily. In terms of tissue distribution, shoots and roots of nodulating plants, at low levels.

It localises to the cell membrane. Its function is as follows. Carrier protein involved in proton-driven auxin influx. Mediates the formation of auxin gradient from developing leaves (site of auxin biosynthesis) to tips by contributing to the loading of auxin in vascular tissues and facilitating acropetal (base to tip) auxin transport within inner tissues of the root apex, and basipetal (tip to base) auxin transport within outer tissues of the root apex. May be involved in lateral roots and nodules formation. This chain is Auxin transporter-like protein 4 (LAX4), found in Medicago truncatula (Barrel medic).